The chain runs to 96 residues: Pro-glucagon (96 aa).

2 stretches are compositionally biased toward basic and acidic residues: residues 1–12 and 19–30; these read LQDAEDSSRFDA and EARELSTPKXHS. Residues 1–35 form a disordered region; that stretch reads LQDAEDSSRFDADDTLAGEARELSTPKXHSEGTFS.

Belongs to the glucagon family.

The protein resides in the secreted. Its function is as follows. Plays a key role in glucose metabolism and homeostasis. Regulates blood glucose by increasing gluconeogenesis and decreasing glycolysis. This Myoxocephalus scorpius (Shorthorn sculpin) protein is Pro-glucagon (gcg).